An 858-amino-acid polypeptide reads, in one-letter code: DNA mismatch repair protein MutS (858 aa).

603-610 lines the ATP pocket; the sequence is GPNMSGKS.

The protein belongs to the DNA mismatch repair MutS family.

Its function is as follows. This protein is involved in the repair of mismatches in DNA. It is possible that it carries out the mismatch recognition step. This protein has a weak ATPase activity. The protein is DNA mismatch repair protein MutS of Streptococcus agalactiae serotype Ia (strain ATCC 27591 / A909 / CDC SS700).